Here is a 377-residue protein sequence, read N- to C-terminus: Nucleoside diphosphate kinase homolog 7 (377 aa).

Residues 3–91 (HSERFVFIAE…YTARQLGSKK (89 aa)) form the DM10 domain.

It belongs to the NDK family. Component of sperm flagellar doublet microtubules. Component of the gamma-tubulin ring complex. In terms of tissue distribution, expressed in trachea multiciliated cells.

Its subcellular location is the cytoplasm. It is found in the cytoskeleton. The protein localises to the microtubule organizing center. The protein resides in the centrosome. It localises to the nucleus. Its subcellular location is the spindle. It is found in the cilium axoneme. The protein localises to the flagellum axoneme. The protein resides in the cell projection. It localises to the cilium. Possesses an intrinsic kinase activity. Displays 3'-5' exonuclease activity with a preference for single-stranded DNA. Does not seem to have nucleoside diphosphate kinase activity. Functional component of the gamma-tubulin ring complex, implicated in the regulation of the microtubule-nucleating activity of the gamma-tubulin ring complex in centrosomes, in a kinase activity-dependent manner. Part of the dynein-decorated doublet microtubules (DMTs) in cilia axoneme, which is required for motile cilia beating. The polypeptide is Nucleoside diphosphate kinase homolog 7 (NME7) (Bos taurus (Bovine)).